A 138-amino-acid chain; its full sequence is Small ribosomal subunit protein uS11c (138 aa).

Residues 1–24 (MAKPIPKVGSRRNGRSSARKSARR) are disordered. Residues 9–24 (GSRRNGRSSARKSARR) show a composition bias toward basic residues.

The protein belongs to the universal ribosomal protein uS11 family. As to quaternary structure, part of the 30S ribosomal subunit.

It is found in the plastid. The protein localises to the chloroplast. The sequence is that of Small ribosomal subunit protein uS11c from Gossypium hirsutum (Upland cotton).